The sequence spans 140 residues: Probable NADH dehydrogenase [ubiquinone] iron-sulfur protein 6, mitochondrial (140 aa).

This sequence belongs to the complex I NDUFS6 subunit family. As to quaternary structure, complex I is composed of 45 different subunits. This is a component of the iron-sulfur (IP) fragment of the enzyme.

The protein localises to the mitochondrion inner membrane. In terms of biological role, accessory subunit of the mitochondrial membrane respiratory chain NADH dehydrogenase (Complex I), that is believed not to be involved in catalysis. Complex I functions in the transfer of electrons from NADH to the respiratory chain. The immediate electron acceptor for the enzyme is believed to be ubiquinone. The chain is Probable NADH dehydrogenase [ubiquinone] iron-sulfur protein 6, mitochondrial (nduf-6) from Caenorhabditis elegans.